Here is a 456-residue protein sequence, read N- to C-terminus: Argininosuccinate lyase (456 aa).

It belongs to the lyase 1 family. Argininosuccinate lyase subfamily.

The protein localises to the cytoplasm. It catalyses the reaction 2-(N(omega)-L-arginino)succinate = fumarate + L-arginine. Its pathway is amino-acid biosynthesis; L-arginine biosynthesis; L-arginine from L-ornithine and carbamoyl phosphate: step 3/3. This is Argininosuccinate lyase from Carboxydothermus hydrogenoformans (strain ATCC BAA-161 / DSM 6008 / Z-2901).